Reading from the N-terminus, the 193-residue chain is FMN-dependent NADH:quinone oxidoreductase (193 aa).

FMN is bound by residues S9, 15–17, and 137–140; these read SSS and TSGG.

It belongs to the azoreductase type 1 family. In terms of assembly, homodimer. The cofactor is FMN.

The enzyme catalyses 2 a quinone + NADH + H(+) = 2 a 1,4-benzosemiquinone + NAD(+). It catalyses the reaction N,N-dimethyl-1,4-phenylenediamine + anthranilate + 2 NAD(+) = 2-(4-dimethylaminophenyl)diazenylbenzoate + 2 NADH + 2 H(+). Functionally, quinone reductase that provides resistance to thiol-specific stress caused by electrophilic quinones. Also exhibits azoreductase activity. Catalyzes the reductive cleavage of the azo bond in aromatic azo compounds to the corresponding amines. The chain is FMN-dependent NADH:quinone oxidoreductase from Pelagibacter ubique (strain HTCC1062).